Here is a 112-residue protein sequence, read N- to C-terminus: Large ribosomal subunit protein uL22 (112 aa).

The protein belongs to the universal ribosomal protein uL22 family. Part of the 50S ribosomal subunit.

Functionally, this protein binds specifically to 23S rRNA; its binding is stimulated by other ribosomal proteins, e.g. L4, L17, and L20. It is important during the early stages of 50S assembly. It makes multiple contacts with different domains of the 23S rRNA in the assembled 50S subunit and ribosome. The globular domain of the protein is located near the polypeptide exit tunnel on the outside of the subunit, while an extended beta-hairpin is found that lines the wall of the exit tunnel in the center of the 70S ribosome. This is Large ribosomal subunit protein uL22 from Legionella pneumophila subsp. pneumophila (strain Philadelphia 1 / ATCC 33152 / DSM 7513).